The sequence spans 444 residues: tRNA-2-methylthio-N(6)-dimethylallyladenosine synthase (444 aa).

Residues K2–Q119 enclose the MTTase N-terminal domain. Residues C11, C48, C82, C156, C160, and C163 each contribute to the [4Fe-4S] cluster site. One can recognise a Radical SAM core domain in the interval K142–A374. Residues Q377–T440 form the TRAM domain.

The protein belongs to the methylthiotransferase family. MiaB subfamily. As to quaternary structure, monomer. The cofactor is [4Fe-4S] cluster.

Its subcellular location is the cytoplasm. It catalyses the reaction N(6)-dimethylallyladenosine(37) in tRNA + (sulfur carrier)-SH + AH2 + 2 S-adenosyl-L-methionine = 2-methylsulfanyl-N(6)-dimethylallyladenosine(37) in tRNA + (sulfur carrier)-H + 5'-deoxyadenosine + L-methionine + A + S-adenosyl-L-homocysteine + 2 H(+). Functionally, catalyzes the methylthiolation of N6-(dimethylallyl)adenosine (i(6)A), leading to the formation of 2-methylthio-N6-(dimethylallyl)adenosine (ms(2)i(6)A) at position 37 in tRNAs that read codons beginning with uridine. This Chromobacterium violaceum (strain ATCC 12472 / DSM 30191 / JCM 1249 / CCUG 213 / NBRC 12614 / NCIMB 9131 / NCTC 9757 / MK) protein is tRNA-2-methylthio-N(6)-dimethylallyladenosine synthase.